The sequence spans 347 residues: NADH-ubiquinone oxidoreductase chain 2 (347 aa).

11 helical membrane-spanning segments follow: residues P3–S23, H25–M45, Y59–L79, I96–P116, I122–L142, I149–G169, I178–P198, M201–L221, M237–L257, E274–M294, and F325–I345.

The protein belongs to the complex I subunit 2 family. As to quaternary structure, core subunit of respiratory chain NADH dehydrogenase (Complex I) which is composed of 45 different subunits. Interacts with TMEM242.

The protein localises to the mitochondrion inner membrane. It carries out the reaction a ubiquinone + NADH + 5 H(+)(in) = a ubiquinol + NAD(+) + 4 H(+)(out). Core subunit of the mitochondrial membrane respiratory chain NADH dehydrogenase (Complex I) which catalyzes electron transfer from NADH through the respiratory chain, using ubiquinone as an electron acceptor. Essential for the catalytic activity and assembly of complex I. The sequence is that of NADH-ubiquinone oxidoreductase chain 2 from Genetta servalina (Servaline genet).